A 64-amino-acid chain; its full sequence is Disintegrin VA6 (64 aa).

A Disintegrin domain is found at 1–64 (NSANPCCDPV…SDCPRNPYKS (64 aa)). Intrachain disulfides connect Cys-6–Cys-29, Cys-20–Cys-26, Cys-25–Cys-50, and Cys-38–Cys-57. Positions 42 to 44 (RGD) match the Cell attachment site motif.

The protein belongs to the venom metalloproteinase (M12B) family. P-II subfamily. P-IId sub-subfamily. As to quaternary structure, homodimer; disulfide-linked. In terms of tissue distribution, expressed by the venom gland.

It localises to the secreted. Functionally, poor inhibitor of platelet aggregation. The disintegrin inhibits the adhesion of cells expressing the RGD-dependent integrin alpha-5/beta-1 (ITGA5/ITGB1) to immobilized fibronectin. Inhibition on alpha-IIb/beta-3 (ITGA2B/ITGB3) is low, and there is no inhibition on alpha-1/beta-1 (ITGA1/ITGB1), alpha-2/beta-1 (ITGA2/ITGB1) and alpha-6/beta-1 (ITGA6/ITGB1). In Vipera ammodytes ammodytes (Western sand viper), this protein is Disintegrin VA6.